The following is a 226-amino-acid chain: Cytidylate kinase (226 aa).

10 to 18 contacts ATP; the sequence is GPASSGKST.

Its subcellular location is the cytoplasm. It catalyses the reaction CMP + ATP = CDP + ADP. The enzyme catalyses dCMP + ATP = dCDP + ADP. In Streptococcus pyogenes serotype M6 (strain ATCC BAA-946 / MGAS10394), this protein is Cytidylate kinase.